The following is a 94-amino-acid chain: Large ribosomal subunit protein eL42 (94 aa).

Positions 11, 14, 71, and 74 each coordinate Zn(2+). A C4-type zinc finger spans residues 11–74; sequence CPFCKRHTIH…LDLRFRCTVC (64 aa).

Belongs to the eukaryotic ribosomal protein eL42 family. Part of the 50S ribosomal subunit. Requires Zn(2+) as cofactor.

Its function is as follows. Binds to the 23S rRNA. The sequence is that of Large ribosomal subunit protein eL42 from Pyrococcus abyssi (strain GE5 / Orsay).